The primary structure comprises 297 residues: N-acetylmuramic acid 6-phosphate etherase (297 aa).

The region spanning 55–218 (ATDALKSGGR…STGAMVKFGK (164 aa)) is the SIS domain. The Proton donor role is filled by Glu83. The active site involves Glu114.

Belongs to the GCKR-like family. MurNAc-6-P etherase subfamily. In terms of assembly, homodimer.

It catalyses the reaction N-acetyl-D-muramate 6-phosphate + H2O = N-acetyl-D-glucosamine 6-phosphate + (R)-lactate. It functions in the pathway amino-sugar metabolism; 1,6-anhydro-N-acetylmuramate degradation. It participates in amino-sugar metabolism; N-acetylmuramate degradation. The protein operates within cell wall biogenesis; peptidoglycan recycling. Functionally, specifically catalyzes the cleavage of the D-lactyl ether substituent of MurNAc 6-phosphate, producing GlcNAc 6-phosphate and D-lactate. Together with AnmK, is also required for the utilization of anhydro-N-acetylmuramic acid (anhMurNAc) either imported from the medium or derived from its own cell wall murein, and thus plays a role in cell wall recycling. The sequence is that of N-acetylmuramic acid 6-phosphate etherase from Enterobacter sp. (strain 638).